A 382-amino-acid polypeptide reads, in one-letter code: Succinyl-diaminopimelate desuccinylase (382 aa).

A Zn(2+)-binding site is contributed by His-68. Residue Asp-70 is part of the active site. Zn(2+) is bound at residue Asp-101. Catalysis depends on Glu-135, which acts as the Proton acceptor. 3 residues coordinate Zn(2+): Glu-136, Glu-164, and His-350.

Belongs to the peptidase M20A family. DapE subfamily. As to quaternary structure, homodimer. Zn(2+) is required as a cofactor. Requires Co(2+) as cofactor.

The enzyme catalyses N-succinyl-(2S,6S)-2,6-diaminopimelate + H2O = (2S,6S)-2,6-diaminopimelate + succinate. It participates in amino-acid biosynthesis; L-lysine biosynthesis via DAP pathway; LL-2,6-diaminopimelate from (S)-tetrahydrodipicolinate (succinylase route): step 3/3. Functionally, catalyzes the hydrolysis of N-succinyl-L,L-diaminopimelic acid (SDAP), forming succinate and LL-2,6-diaminopimelate (DAP), an intermediate involved in the bacterial biosynthesis of lysine and meso-diaminopimelic acid, an essential component of bacterial cell walls. This Acidithiobacillus ferrooxidans (strain ATCC 23270 / DSM 14882 / CIP 104768 / NCIMB 8455) (Ferrobacillus ferrooxidans (strain ATCC 23270)) protein is Succinyl-diaminopimelate desuccinylase.